Reading from the N-terminus, the 309-residue chain is Probable manganese-dependent inorganic pyrophosphatase (309 aa).

Mn(2+)-binding residues include His9, Asp13, Asp15, Asp75, His97, and Asp149.

It belongs to the PPase class C family. The cofactor is Mn(2+).

The protein localises to the cytoplasm. The catalysed reaction is diphosphate + H2O = 2 phosphate + H(+). The polypeptide is Probable manganese-dependent inorganic pyrophosphatase (Exiguobacterium sp. (strain ATCC BAA-1283 / AT1b)).